A 726-amino-acid polypeptide reads, in one-letter code: Catalase-peroxidase (726 aa).

The tract at residues 1 to 25 is disordered; that stretch reads MDAKTDDSAGKCPFTGGGRRGHRNR. A cross-link (tryptophyl-tyrosyl-methioninium (Trp-Tyr) (with M-244)) is located at residues 96 to 218; the sequence is WHSAGTYRIT…LAAVQMGLIY (123 aa). H97 (proton acceptor) is an active-site residue. Positions 218-244 form a cross-link, tryptophyl-tyrosyl-methioninium (Tyr-Met) (with W-96); it reads YVNPEGPNGNPDPVAAAKDIRETFYRM. H259 is a heme b binding site.

The protein belongs to the peroxidase family. Peroxidase/catalase subfamily. Homodimer or homotetramer. Heme b is required as a cofactor. Post-translationally, formation of the three residue Trp-Tyr-Met cross-link is important for the catalase, but not the peroxidase activity of the enzyme.

It carries out the reaction H2O2 + AH2 = A + 2 H2O. It catalyses the reaction 2 H2O2 = O2 + 2 H2O. In terms of biological role, bifunctional enzyme with both catalase and broad-spectrum peroxidase activity. The protein is Catalase-peroxidase of Chelativorans sp. (strain BNC1).